Reading from the N-terminus, the 1049-residue chain is Isoleucine--tRNA ligase (1049 aa).

A 'HIGH' region motif is present at residues proline 48–threonine 58. A 'KMSKS' region motif is present at residues lysine 596–serine 600. Lysine 599 provides a ligand contact to ATP.

The protein belongs to the class-I aminoacyl-tRNA synthetase family. IleS type 2 subfamily. In terms of assembly, monomer. Requires Zn(2+) as cofactor.

The protein localises to the cytoplasm. The enzyme catalyses tRNA(Ile) + L-isoleucine + ATP = L-isoleucyl-tRNA(Ile) + AMP + diphosphate. Functionally, catalyzes the attachment of isoleucine to tRNA(Ile). As IleRS can inadvertently accommodate and process structurally similar amino acids such as valine, to avoid such errors it has two additional distinct tRNA(Ile)-dependent editing activities. One activity is designated as 'pretransfer' editing and involves the hydrolysis of activated Val-AMP. The other activity is designated 'posttransfer' editing and involves deacylation of mischarged Val-tRNA(Ile). This Methanothrix thermoacetophila (strain DSM 6194 / JCM 14653 / NBRC 101360 / PT) (Methanosaeta thermophila) protein is Isoleucine--tRNA ligase.